The following is a 238-amino-acid chain: Ribonuclease PH (238 aa).

Residues R86 and 124 to 126 (GTR) contribute to the phosphate site.

Belongs to the RNase PH family. Homohexameric ring arranged as a trimer of dimers.

The enzyme catalyses tRNA(n+1) + phosphate = tRNA(n) + a ribonucleoside 5'-diphosphate. Phosphorolytic 3'-5' exoribonuclease that plays an important role in tRNA 3'-end maturation. Removes nucleotide residues following the 3'-CCA terminus of tRNAs; can also add nucleotides to the ends of RNA molecules by using nucleoside diphosphates as substrates, but this may not be physiologically important. Probably plays a role in initiation of 16S rRNA degradation (leading to ribosome degradation) during starvation. This Aliivibrio fischeri (strain ATCC 700601 / ES114) (Vibrio fischeri) protein is Ribonuclease PH.